The chain runs to 196 residues: Small ribosomal subunit protein uS4c (196 aa).

Positions 17-36 (ALPGLTRKTPKSGSNLKKKF) are disordered. In terms of domain architecture, S4 RNA-binding spans 89–150 (MRLDNIVFRL…NQRSKRLVQN (62 aa)).

The protein belongs to the universal ribosomal protein uS4 family. In terms of assembly, part of the 30S ribosomal subunit. Contacts protein S5. The interaction surface between S4 and S5 is involved in control of translational fidelity.

It is found in the plastid. Its subcellular location is the chloroplast. Its function is as follows. One of the primary rRNA binding proteins, it binds directly to 16S rRNA where it nucleates assembly of the body of the 30S subunit. In terms of biological role, with S5 and S12 plays an important role in translational accuracy. The polypeptide is Small ribosomal subunit protein uS4c (rps4) (Tragus racemosus (Carrot grass)).